We begin with the raw amino-acid sequence, 166 residues long: CDP-archaeol synthase (166 aa).

The next 5 helical transmembrane spans lie at 7–27 (LLLS…GPFI), 55–75 (LIVA…FFTA), 78–98 (TLIS…GAFI), 116–136 (LDFV…ITWY), and 138–158 (FLFI…VAYL).

Belongs to the CDP-archaeol synthase family. It depends on Mg(2+) as a cofactor.

The protein localises to the cell membrane. The enzyme catalyses 2,3-bis-O-(geranylgeranyl)-sn-glycerol 1-phosphate + CTP + H(+) = CDP-2,3-bis-O-(geranylgeranyl)-sn-glycerol + diphosphate. Its pathway is membrane lipid metabolism; glycerophospholipid metabolism. Functionally, catalyzes the formation of CDP-2,3-bis-(O-geranylgeranyl)-sn-glycerol (CDP-archaeol) from 2,3-bis-(O-geranylgeranyl)-sn-glycerol 1-phosphate (DGGGP) and CTP. This reaction is the third ether-bond-formation step in the biosynthesis of archaeal membrane lipids. This Saccharolobus islandicus (strain L.S.2.15 / Lassen #1) (Sulfolobus islandicus) protein is CDP-archaeol synthase.